A 122-amino-acid chain; its full sequence is Large ribosomal subunit protein uL14 (122 aa).

This sequence belongs to the universal ribosomal protein uL14 family. In terms of assembly, part of the 50S ribosomal subunit. Forms a cluster with proteins L3 and L19. In the 70S ribosome, L14 and L19 interact and together make contacts with the 16S rRNA in bridges B5 and B8.

In terms of biological role, binds to 23S rRNA. Forms part of two intersubunit bridges in the 70S ribosome. This is Large ribosomal subunit protein uL14 from Phytoplasma mali (strain AT).